The sequence spans 364 residues: GTPase Obg (364 aa).

In terms of domain architecture, Obg spans 1-161 (MRFVDEVTIS…KYLRLELKIL (161 aa)). An OBG-type G domain is found at 162–334 (ADAGIIGLPN…LVDAIWKLQS (173 aa)). GTP contacts are provided by residues 168–175 (GLPNAGKS), 193–197 (FTTLN), 217–220 (DIPG), 287–290 (NKID), and 315–317 (SAE). Mg(2+)-binding residues include Ser175 and Thr195.

It belongs to the TRAFAC class OBG-HflX-like GTPase superfamily. OBG GTPase family. Monomer. Requires Mg(2+) as cofactor.

The protein resides in the cytoplasm. An essential GTPase which binds GTP, GDP and possibly (p)ppGpp with moderate affinity, with high nucleotide exchange rates and a fairly low GTP hydrolysis rate. Plays a role in control of the cell cycle, stress response, ribosome biogenesis and in those bacteria that undergo differentiation, in morphogenesis control. The sequence is that of GTPase Obg from Lawsonia intracellularis (strain PHE/MN1-00).